We begin with the raw amino-acid sequence, 434 residues long: Mothers against decapentaplegic homolog 9 (434 aa).

Residues Pro16–Pro140 form the MH1 domain. Zn(2+) contacts are provided by Cys68, Cys113, Cys125, and His130. A disordered region spans residues Met171–His222. Polar residues predominate over residues Cys202–Gln221. One can recognise an MH2 domain in the interval Trp236–Ser434.

This sequence belongs to the dwarfin/SMAD family. In terms of assembly, interaction with the co-SMAD SMAD4. Interacts with PEBP2-alpha subunit. Interacts with RANBP3L. In terms of processing, phosphorylated on serine by BMP (bone morphogenetic proteins) type 1 receptor kinase. Phosphorylated by activin type I receptor-like kinase-2 (ALK-2).

The protein resides in the cytoplasm. It localises to the nucleus. In terms of biological role, transcriptional modulator activated by BMP (bone morphogenetic proteins) type 1 receptor kinase. SMAD9 is a receptor-regulated SMAD (R-SMAD). Has been shown to be activated by activin type I receptor-like kinase-2 (ALK-2) which stimulates heteromerization between SMAD9 and SMAD4. ALK-2 binds TGF-beta, activin and BMP. This chain is Mothers against decapentaplegic homolog 9 (Smad9), found in Rattus norvegicus (Rat).